The chain runs to 463 residues: Glycine--tRNA ligase (463 aa).

Substrate-binding residues include arginine 98 and glutamate 174. Residues 206–208, 216–221, 290–291, and 334–337 contribute to the ATP site; these read RNE, FRTREF, EL, and GADR. 221 to 225 lines the substrate pocket; that stretch reads FEQME. 330–334 contributes to the substrate binding site; that stretch reads EPSLG.

This sequence belongs to the class-II aminoacyl-tRNA synthetase family. As to quaternary structure, homodimer.

The protein resides in the cytoplasm. It catalyses the reaction tRNA(Gly) + glycine + ATP = glycyl-tRNA(Gly) + AMP + diphosphate. In terms of biological role, catalyzes the attachment of glycine to tRNA(Gly). The sequence is that of Glycine--tRNA ligase from Staphylococcus aureus (strain bovine RF122 / ET3-1).